The following is a 439-amino-acid chain: 5-methylthioadenosine/S-adenosylhomocysteine deaminase (439 aa).

Residues His70 and His72 each coordinate Zn(2+). Substrate is bound by residues Glu99 and His192. His219 contributes to the Zn(2+) binding site. Substrate is bound by residues Glu222 and Asp307. Residue Asp307 coordinates Zn(2+).

It belongs to the metallo-dependent hydrolases superfamily. MTA/SAH deaminase family. It depends on Zn(2+) as a cofactor.

The catalysed reaction is S-adenosyl-L-homocysteine + H2O + H(+) = S-inosyl-L-homocysteine + NH4(+). The enzyme catalyses S-methyl-5'-thioadenosine + H2O + H(+) = S-methyl-5'-thioinosine + NH4(+). In terms of biological role, catalyzes the deamination of 5-methylthioadenosine and S-adenosyl-L-homocysteine into 5-methylthioinosine and S-inosyl-L-homocysteine, respectively. Is also able to deaminate adenosine. The protein is 5-methylthioadenosine/S-adenosylhomocysteine deaminase of Thermodesulfovibrio yellowstonii (strain ATCC 51303 / DSM 11347 / YP87).